A 153-amino-acid polypeptide reads, in one-letter code: Pheromone-binding protein Gp-9 (153 aa).

Residues 1 to 19 (MKTFVLHIFIFALVAFASA) form the signal peptide. Disulfide bonds link C37/C77, C73/C129, and C118/C138.

The protein belongs to the PBP/GOBP family. In terms of assembly, homodimer.

The protein localises to the secreted. Colony queen number, a major feature of social organization, is associated with worker genotype for Gp-9. Colonies are headed by either a single reproductive queen (monogyne form) or multiple queens (polygyne form). Differences in worker Gp-9 genotypes between social forms may cause differences in workers' abilities to recognize queens and regulate their numbers. In Solenopsis substituta (Fire ant), this protein is Pheromone-binding protein Gp-9.